The following is a 258-amino-acid chain: Agamous-like MADS-box protein AGL3 (258 aa).

In terms of domain architecture, MADS-box spans 3–57 (RGKVELKRIENKINRQVTFAKRRNGLLKKAYELSVLCDAEIALLIFSNRGKLYEF). The 91-residue stretch at 88–178 (LQDKYQDYLK…RRKLEDSDAA (91 aa)) folds into the K-box domain. Positions 186–214 (SSAAEQQQQHQQQQQGMSSYQSNPPIQEA) are disordered. Positions 191–200 (QQQQHQQQQQ) are enriched in low complexity. Polar residues predominate over residues 201-210 (GMSSYQSNPP).

Forms homodimers. Interacts with TT16/AGL32. In terms of tissue distribution, expressed in aerial vegetative organs and flowers, but not in roots. Expressed in flower primordia.

The protein resides in the nucleus. Functionally, probable transcription factor that binds specifically to the CArG box DNA sequence 5'-CC (A/T)6 GG-3'. Plays an important role in the determination of flower meristem identity. Involved in the specification of sepal identity. Contributes to the development of petals, stamens and carpels. The chain is Agamous-like MADS-box protein AGL3 (AGL3) from Arabidopsis thaliana (Mouse-ear cress).